A 250-amino-acid chain; its full sequence is Probable transcriptional regulatory protein ROP_68700 (250 aa).

It belongs to the TACO1 family.

The protein localises to the cytoplasm. This chain is Probable transcriptional regulatory protein ROP_68700, found in Rhodococcus opacus (strain B4).